Consider the following 314-residue polypeptide: 4-hydroxy-3-methylbut-2-enyl diphosphate reductase (314 aa).

C12 provides a ligand contact to [4Fe-4S] cluster. (2E)-4-hydroxy-3-methylbut-2-enyl diphosphate is bound by residues H41 and H74. Residues H41 and H74 each contribute to the dimethylallyl diphosphate site. Residues H41 and H74 each coordinate isopentenyl diphosphate. [4Fe-4S] cluster is bound at residue C96. H124 is a (2E)-4-hydroxy-3-methylbut-2-enyl diphosphate binding site. H124 is a binding site for dimethylallyl diphosphate. H124 contacts isopentenyl diphosphate. E126 serves as the catalytic Proton donor. A (2E)-4-hydroxy-3-methylbut-2-enyl diphosphate-binding site is contributed by T167. C197 lines the [4Fe-4S] cluster pocket. Residues S225, S226, N227, and S269 each contribute to the (2E)-4-hydroxy-3-methylbut-2-enyl diphosphate site. Residues S225, S226, N227, and S269 each contribute to the dimethylallyl diphosphate site. Residues S225, S226, N227, and S269 each coordinate isopentenyl diphosphate.

This sequence belongs to the IspH family. It depends on [4Fe-4S] cluster as a cofactor.

The enzyme catalyses isopentenyl diphosphate + 2 oxidized [2Fe-2S]-[ferredoxin] + H2O = (2E)-4-hydroxy-3-methylbut-2-enyl diphosphate + 2 reduced [2Fe-2S]-[ferredoxin] + 2 H(+). The catalysed reaction is dimethylallyl diphosphate + 2 oxidized [2Fe-2S]-[ferredoxin] + H2O = (2E)-4-hydroxy-3-methylbut-2-enyl diphosphate + 2 reduced [2Fe-2S]-[ferredoxin] + 2 H(+). Its pathway is isoprenoid biosynthesis; dimethylallyl diphosphate biosynthesis; dimethylallyl diphosphate from (2E)-4-hydroxy-3-methylbutenyl diphosphate: step 1/1. The protein operates within isoprenoid biosynthesis; isopentenyl diphosphate biosynthesis via DXP pathway; isopentenyl diphosphate from 1-deoxy-D-xylulose 5-phosphate: step 6/6. In terms of biological role, catalyzes the conversion of 1-hydroxy-2-methyl-2-(E)-butenyl 4-diphosphate (HMBPP) into a mixture of isopentenyl diphosphate (IPP) and dimethylallyl diphosphate (DMAPP). Acts in the terminal step of the DOXP/MEP pathway for isoprenoid precursor biosynthesis. The protein is 4-hydroxy-3-methylbut-2-enyl diphosphate reductase of Aliivibrio fischeri (strain ATCC 700601 / ES114) (Vibrio fischeri).